The chain runs to 621 residues: 5-aminolevulinate synthase, mitochondrial (621 aa).

A disordered region spans residues 76 to 95 (DAKGSLAGRPVHHKAATEST). The substrate site is built by arginine 122 and serine 234. 3 residues coordinate pyridoxal 5'-phosphate: serine 286, histidine 314, and threonine 359. Residue lysine 362 is part of the active site. An N6-(pyridoxal phosphate)lysine modification is found at lysine 362. Pyridoxal 5'-phosphate contacts are provided by threonine 391 and threonine 392. Threonine 477 is a substrate binding site.

It belongs to the class-II pyridoxal-phosphate-dependent aminotransferase family. In terms of assembly, homodimer. Pyridoxal 5'-phosphate is required as a cofactor.

It is found in the mitochondrion matrix. The catalysed reaction is succinyl-CoA + glycine + H(+) = 5-aminolevulinate + CO2 + CoA. It functions in the pathway porphyrin-containing compound metabolism; protoporphyrin-IX biosynthesis; 5-aminolevulinate from glycine: step 1/1. Functionally, catalyzes the synthesis of 5-aminolevulinate (ALA) from succinyl-CoA and glycine, the first and rate-limiting step in heme biosynthesis. This Agaricus bisporus (White button mushroom) protein is 5-aminolevulinate synthase, mitochondrial (hem1).